The primary structure comprises 748 residues: Probable transcriptional regulator SLK1 (748 aa).

Disordered regions lie at residues 67 to 93 (QHLP…RENN) and 138 to 163 (QQRL…QQQQ). Positions 71–81 (QQQQQQLLQQQ) are enriched in low complexity. The dimerization stretch occupies residues 204–451 (PAENCITYWR…EQKIGPIEGL (248 aa)). The Nuclear localization signal signature appears at 213–227 (RKFVAEYFSPRAKQR). The segment covering 572–587 (NAMNNPNSNTGKQEGF) has biased composition (polar residues). Disordered stretches follow at residues 572–653 (NAMN…GNTP) and 667–712 (ENGG…NNSF). The span at 588–606 (SSQNPTPNSNQSPSSSSQQ) shows a compositional bias: low complexity. Positions 615–653 (FPNSPQMQQQQRTMNGPTNILPQNHPHQLQSPHSHGNTP) are enriched in polar residues. Over residues 667–686 (ENGGSVQQQQAFSGQSGSNS) the composition is skewed to low complexity. A compositionally biased stretch (polar residues) spans 687-699 (NAERNTTASTSNI).

This sequence belongs to the adn1/SEU family. As to quaternary structure, forms corepressor complexes with LUH; LUH is the transcription repressor subunit and SLK1 the specific DNA-binding adapters. As to expression, expressed in young flower meristems, ovules and the carpel margin meristem.

It is found in the nucleus. Functionally, probable transcription regulator that functions in the development of the carpel margin meristem similarly to SEUSS (SEU). In association with SEU, supports organ development from meristematic regions by facilitating auxin response and thus organ initiation, and by sustaining meristematic potential through the maintenance of PHABULOSA expression. DNA-binding adapter subunit of the SEU-SLK1 transcriptional corepressor of abiotic stress (e.g. salt and osmotic stress) response genes. The chain is Probable transcriptional regulator SLK1 (SLK1) from Arabidopsis thaliana (Mouse-ear cress).